Reading from the N-terminus, the 606-residue chain is Gamma-aminobutyric acid receptor subunit beta (606 aa).

A signal peptide spans 1–44 (MSDSKMDKLARMAPLPRTPLLTIWLAINMALIAQETGHKRIHTV). Residues 45 to 268 (QAATGGGSML…CEIQFVRSMG (224 aa)) are Extracellular-facing. The N-linked (GlcNAc...) asparagine glycan is linked to Asn58. Cysteines 185 and 199 form a disulfide. Asn253 is a glycosylation site (N-linked (GlcNAc...) asparagine). 3 consecutive transmembrane segments (helical) span residues 269 to 291 (YYLI…SFWL), 297 to 316 (PARV…LMSS), and 333 to 356 (YLGT…YMAK). Residues 357–568 (RIQMRKQRFM…LGITPSDIDK (212 aa)) are Cytoplasmic-facing. Disordered regions lie at residues 376 to 451 (KQQL…VSNR) and 482 to 542 (HDPK…AAVP). Residues 381 to 395 (GANQQQANPNPNANV) are compositionally biased toward low complexity. A compositionally biased stretch (gly residues) spans 396-425 (GGPGGVGVGPGGPGGPGGGVNVGVGMGMGP). The segment covering 430 to 443 (GHGHHAHSHGHPHA) has biased composition (basic residues). Positions 499–536 (GGRGGPQSHGPGPGQGGGPPGGGGGGGGGGGPPEGGGD) are enriched in gly residues. Residues 569 to 590 (YSRIVFPVCFVCFNLMYWIIYL) form a helical membrane-spanning segment.

The protein belongs to the ligand-gated ion channel (TC 1.A.9) family. Gamma-aminobutyric acid receptor (TC 1.A.9.5) subfamily.

The protein resides in the postsynaptic cell membrane. The protein localises to the cell membrane. Functionally, GABA, an inhibitory neurotransmitter, mediates neuronal inhibition by binding to the GABA receptor and opening an integral chloride channel. This Drosophila simulans (Fruit fly) protein is Gamma-aminobutyric acid receptor subunit beta (Rdl).